The primary structure comprises 469 residues: Ribulose bisphosphate carboxylase large chain (469 aa).

N6,N6,N6-trimethyllysine is present on Lys-7. The substrate site is built by Asn-116 and Thr-166. Lys-168 serves as the catalytic Proton acceptor. Lys-170 lines the substrate pocket. Residues Lys-194, Asp-196, and Glu-197 each coordinate Mg(2+). N6-carboxylysine is present on Lys-194. His-287 acts as the Proton acceptor in catalysis. Arg-288, His-320, and Ser-372 together coordinate substrate.

It belongs to the RuBisCO large chain family. Type I subfamily. As to quaternary structure, heterohexadecamer of 8 large chains and 8 small chains; disulfide-linked. The disulfide link is formed within the large subunit homodimers. Requires Mg(2+) as cofactor. The disulfide bond which can form in the large chain dimeric partners within the hexadecamer appears to be associated with oxidative stress and protein turnover.

It is found in the plastid. It localises to the chloroplast. It carries out the reaction 2 (2R)-3-phosphoglycerate + 2 H(+) = D-ribulose 1,5-bisphosphate + CO2 + H2O. The catalysed reaction is D-ribulose 1,5-bisphosphate + O2 = 2-phosphoglycolate + (2R)-3-phosphoglycerate + 2 H(+). Functionally, ruBisCO catalyzes two reactions: the carboxylation of D-ribulose 1,5-bisphosphate, the primary event in carbon dioxide fixation, as well as the oxidative fragmentation of the pentose substrate in the photorespiration process. Both reactions occur simultaneously and in competition at the same active site. The chain is Ribulose bisphosphate carboxylase large chain from Pachira aquatica (Guiana chestnut).